A 286-amino-acid chain; its full sequence is Perivitellin-2 31 kDa subunit (286 aa).

The signal sequence occupies residues 1–30 (MVKKIHFVMERHASIVAFLLAVLALTESQA). Asn-101 carries N-linked (GlcNAc...) asparagine glycosylation.

Belongs to the tectonin family. Perivitellin-2 is a dimer of heterodimers held together head-to-tail by non-covalent forces. The heterodimer is composed of the tachylectin subunit (31 kDa) and the MACPF subunit (67 kDa) that are disulfide-linked. PV2 is a very high density lipoprotein (VHDL). It contains 3.75% of lipids. The major lipid classes are free sterols and phospholipids and also have significant quantities of energy-providing triacylglycerides and free fatty acids. As to expression, produced by albumen secretory cells. Found in developing eggs.

Its subcellular location is the secreted. It localises to the target cell membrane. Its function is as follows. The egg defensive protein perivitellin-2 is a pore-forming two-subunit glycoprotein that affects both the nervous and digestive systems of mammals. In addition, it is a source of both structural and energetic molecules during embryonic development. The tachylectin subunit (31 kDa) binds target membranes while the MACPF subunit (67 kDa) disrupts lipid bilayers forming large pores (inner diameter of about 5.6 nm) altering the plasma membrance conductance. Both in vivo and in vitro, the protein shows wide pH range stability and is resistant to enzymatic proteolysis from gastrointestinal environments. It is cytotoxic to both epithelial and immune cells from the digestive system of mammals. It induces enterocyte death by a lytic mechanism and disrupts enterocyte monolayers in a dose-dependent manner. After oral administration to mice, it binds enterocytes and induces large dose-dependent morphological changes on their small intestine mucosa, reducing the absorptive surface. Additionally, it is detected in the Peyer's patches where it activates lymphoid follicles and triggers apoptosis. The toxin can also traverse the intestinal barrier and induce oral adaptive immunity with evidence of circulating antibody response. The toxin also shows hemagglutination properties thanks to the tachylectin subunit, but has no hemolytic activity. In addition to enterotoxin activity, the toxin also acts as a neurotoxin, since an intraperitoneal injection can induce paralysis of the mice rear limbs, followed by death. This Pomacea maculata (Giant applesnail) protein is Perivitellin-2 31 kDa subunit.